The following is a 252-amino-acid chain: Beta-carotene isomerase D27, chloroplastic (252 aa).

A chloroplast-targeting transit peptide spans Met1–Ser43.

The cofactor is Fe cation. In terms of tissue distribution, highly expressed in roots. Expressed at low levels in leaves and stems.

Its subcellular location is the plastid. It is found in the chloroplast. It catalyses the reaction all-trans-beta-carotene = 9-cis-beta-carotene. Involved in strigolactones biosynthesis by catalyzing the isomerization of the C9-C10 double bond in all-trans-beta-carotene leading to 9-cis-beta-carotene and providing the substrate for CCD7. Strigolactones are hormones that inhibit tillering and shoot branching through the MAX-dependent pathway, contribute to the regulation of shoot architectural response to phosphate-limiting conditions and function as rhizosphere signals that stimulate hyphal branching of arbuscular mycorrhizal fungi and trigger seed germination of root parasitic weeds. The sequence is that of Beta-carotene isomerase D27, chloroplastic from Medicago truncatula (Barrel medic).